A 324-amino-acid chain; its full sequence is Glucosyl-3-phosphoglycerate synthase (324 aa).

UDP-alpha-D-glucose is bound by residues 50–54 (PALNE), Ser81, Lys114, and 134–135 (DS). Asp136 provides a ligand contact to Mn(2+). (2R)-3-phosphoglycerate is bound at residue 184–187 (GRVT). Residues 229–232 (YGVE) and 256–261 (RAHRNR) each bind UDP-alpha-D-glucose. Position 258 (His258) interacts with Mn(2+). Residue Asn260 coordinates (2R)-3-phosphoglycerate.

Belongs to the glycosyltransferase 2 family. Homotrimer. Mg(2+) serves as cofactor. It depends on Mn(2+) as a cofactor.

The enzyme catalyses an NDP-alpha-D-glucose + (2R)-3-phosphoglycerate = (2R)-2-O-(alpha-D-glucopyranosyl)-3-phospho-glycerate + a ribonucleoside 5'-diphosphate + H(+). It catalyses the reaction (2R)-3-phosphoglycerate + UDP-alpha-D-glucose = (2R)-2-O-(alpha-D-glucopyranosyl)-3-phospho-glycerate + UDP + H(+). The catalysed reaction is ADP-alpha-D-glucose + (2R)-3-phosphoglycerate = (2R)-2-O-(alpha-D-glucopyranosyl)-3-phospho-glycerate + ADP + H(+). It carries out the reaction GDP-D-glucose + (2R)-3-phosphoglycerate = (2R)-2-O-(alpha-D-glucopyranosyl)-3-phospho-glycerate + GDP + H(+). In terms of biological role, involved in the biosynthesis of 6-O-methylglucose lipopolysaccarides (MGLPs). Catalyzes the transfer of the glucose moiety from a nuleotide sugar such as UDP-alpha-D-glucose to the position 2 of 3-phospho-D-glycerate (3-PGA) to form glucosyl-3-phosphoglycerate (GPG). It can use UDP-glucose, ADP-glucose and GDP-glucose as sugar donor substrates with decreasing affinity and with 3-PGA as an acceptor. D-glycerate can only be an acceptor with ADP-glucose and at a very low rate. This is Glucosyl-3-phosphoglycerate synthase (gpgS) from Mycobacterium bovis (strain ATCC BAA-935 / AF2122/97).